Here is a 232-residue protein sequence, read N- to C-terminus: tRNA1(Val) (adenine(37)-N6)-methyltransferase (232 aa).

The protein belongs to the methyltransferase superfamily. tRNA (adenine-N(6)-)-methyltransferase family.

Its subcellular location is the cytoplasm. The catalysed reaction is adenosine(37) in tRNA1(Val) + S-adenosyl-L-methionine = N(6)-methyladenosine(37) in tRNA1(Val) + S-adenosyl-L-homocysteine + H(+). Its function is as follows. Specifically methylates the adenine in position 37 of tRNA(1)(Val) (anticodon cmo5UAC). This chain is tRNA1(Val) (adenine(37)-N6)-methyltransferase, found in Pseudoalteromonas translucida (strain TAC 125).